The chain runs to 318 residues: Probable carboxylesterase 1 (318 aa).

Met-1 carries the N-acetylmethionine modification. The Involved in the stabilization of the negatively charged intermediate by the formation of the oxyanion hole motif lies at 79–81 (HGG). Active-site residues include Ser-163, Asp-258, and His-290.

The protein belongs to the 'GDXG' lipolytic enzyme family. In terms of tissue distribution, expressed in roots, stems, flowers and siliques.

It carries out the reaction a carboxylic ester + H2O = an alcohol + a carboxylate + H(+). Functionally, carboxylesterase acting on esters with varying acyl chain length. This chain is Probable carboxylesterase 1 (CXE1), found in Arabidopsis thaliana (Mouse-ear cress).